The following is a 433-amino-acid chain: Serine/threonine-protein kinase STK11 (433 aa).

Position 31 is a phosphoserine (S31). N6-acetyllysine occurs at positions 44 and 48. The interval 45–90 is sufficient for interaction with SIRT1; the sequence is LIGKYLMGDLLGEGSYGKVKEVLDSETLCRRAVKILKKKKLRRIPN. Positions 49–309 constitute a Protein kinase domain; that stretch reads YLMGDLLGEG…IRQIRQHSWF (261 aa). ATP is bound by residues 55 to 63 and K78; that span reads LGEGSYGKV. An N6-acetyllysine mark is found at K96 and K97. Residue D176 is the Proton acceptor of the active site. T189 carries the post-translational modification Phosphothreonine; by autocatalysis. N6-acetyllysine is present on residues K296 and K311. The segment at 312–331 is disordered; sequence KHPPAEAPVPIPPSPDTKDR. Pro residues predominate over residues 316-326; that stretch reads AEAPVPIPPSP. Phosphoserine is present on S325. T336 is subject to Phosphothreonine; by autocatalysis. T363 bears the Phosphothreonine; by ATM and autocatalysis mark. Residues 397–433 are disordered; the sequence is AAQLSTKSRAEGRAPNPARKACSASSKIRRLSACKQQ. Q399 and S401 each carry phosphoserine. The residue at position 416 (K416) is an N6-acetyllysine. Residue C418 is the site of S-palmitoyl cysteine attachment. An N6-acetyllysine modification is found at K423. The span at 423 to 433 shows a compositional bias: basic residues; sequence KIRRLSACKQQ. Phosphoserine; by autocatalysis, PKA, PKC/PRKCZ and RPS6KA1 is present on S428. C430 is modified (cysteine methyl ester). C430 carries the S-farnesyl cysteine lipid modification. Residue K431 is modified to N6-acetyllysine. Positions 431-433 are cleaved as a propeptide — removed in mature form; sequence KQQ.

Belongs to the protein kinase superfamily. CAMK Ser/Thr protein kinase family. LKB1 subfamily. As to quaternary structure, catalytic component of a trimeric complex composed of STK11/LKB1, STRAD (STRADA or STRADB) and CAB39/MO25 (CAB39/MO25alpha or CAB39L/MO25beta): the complex tethers STK11/LKB1 in the cytoplasm and stimulates its catalytic activity. Found in a ternary complex composed of SMAD4, STK11/LKB1 and STK11IP. Interacts with p53/TP53, SMAD4, STK11IP and WDR6. Interacts with NR4A1. Interacts with NISCH; this interaction may increase STK11 activity. Interacts with PTEN; leading to PTEN phosphorylation. Interacts with SIRT1; the interaction deacetylates STK11. Interacts with CDKN1A. Requires Mg(2+) as cofactor. It depends on Mn(2+) as a cofactor. Post-translationally, phosphorylated by ATM at Thr-363 following ionizing radiation (IR). Phosphorylation at Ser-428 by RPS6KA1 and/or some PKA is required to inhibit cell growth. Phosphorylation at Ser-428 is also required during neuronal polarization to mediate phosphorylation of BRSK1 and BRSK2. Phosphorylation by PKC/PRKCZ at Ser-399 in isoform 2 promotes metformin (or peroxynitrite)-induced nuclear export of STK11 and activation of AMPK. UV radiation-induced phosphorylation at Thr-363 mediates CDKN1A degradation. In terms of processing, acetylated. Deacetylation at Lys-48 enhances cytoplasmic localization and kinase activity in vitro. As to expression, ubiquitously expressed. Strongest expression in testis and fetal liver.

Its subcellular location is the nucleus. It localises to the cytoplasm. The protein resides in the membrane. It is found in the mitochondrion. It catalyses the reaction L-seryl-[protein] + ATP = O-phospho-L-seryl-[protein] + ADP + H(+). It carries out the reaction L-threonyl-[protein] + ATP = O-phospho-L-threonyl-[protein] + ADP + H(+). With respect to regulation, activated by forming a complex with STRAD (STRADA or STRADB) and CAB39/MO25 (CAB39/MO25alpha or CAB39L/MO25beta): STRADA (or STRADB)-binding promotes a conformational change of STK11/LKB1 in an active conformation, which is stabilized by CAB39/MO25alpha (or CAB39L/MO25beta) interacting with the STK11/LKB1 activation loop. Sequestration in the nucleus by NR4A1 prevents it from phosphorylating and activating cytoplasmic AMPK. Functionally, tumor suppressor serine/threonine-protein kinase that controls the activity of AMP-activated protein kinase (AMPK) family members, thereby playing a role in various processes such as cell metabolism, cell polarity, apoptosis and DNA damage response. Acts by phosphorylating the T-loop of AMPK family proteins, thus promoting their activity: phosphorylates PRKAA1, PRKAA2, BRSK1, BRSK2, MARK1, MARK2, MARK3, MARK4, NUAK1, NUAK2, SIK1, SIK2, SIK3 and SNRK but not MELK. Also phosphorylates non-AMPK family proteins such as STRADA, PTEN and possibly p53/TP53. Acts as a key upstream regulator of AMPK by mediating phosphorylation and activation of AMPK catalytic subunits PRKAA1 and PRKAA2 and thereby regulates processes including: inhibition of signaling pathways that promote cell growth and proliferation when energy levels are low, glucose homeostasis in liver, activation of autophagy when cells undergo nutrient deprivation, and B-cell differentiation in the germinal center in response to DNA damage. Also acts as a regulator of cellular polarity by remodeling the actin cytoskeleton. Required for cortical neuron polarization by mediating phosphorylation and activation of BRSK1 and BRSK2, leading to axon initiation and specification. Involved in DNA damage response: interacts with p53/TP53 and recruited to the CDKN1A/WAF1 promoter to participate in transcription activation. Able to phosphorylate p53/TP53; the relevance of such result in vivo is however unclear and phosphorylation may be indirect and mediated by downstream STK11/LKB1 kinase NUAK1. Also acts as a mediator of p53/TP53-dependent apoptosis via interaction with p53/TP53: translocates to the mitochondrion during apoptosis and regulates p53/TP53-dependent apoptosis pathways. Regulates UV radiation-induced DNA damage response mediated by CDKN1A. In association with NUAK1, phosphorylates CDKN1A in response to UV radiation and contributes to its degradation which is necessary for optimal DNA repair. Its function is as follows. Has a role in spermiogenesis. In Homo sapiens (Human), this protein is Serine/threonine-protein kinase STK11.